We begin with the raw amino-acid sequence, 248 residues long: Probable transcriptional regulatory protein NGR_c27950 (248 aa).

The protein belongs to the TACO1 family.

It localises to the cytoplasm. This is Probable transcriptional regulatory protein NGR_c27950 from Sinorhizobium fredii (strain NBRC 101917 / NGR234).